A 345-amino-acid chain; its full sequence is MNDIFIIAGPTASGKSELAMLLAQKFNGVIINADSMQIYKEIPIITASPSISEKQQIDHYLYNYVSIFHSDINELNSFDNISQSKVNADYNNINLQQSITKHLTDRRYSVAKYVQEACKIIRSVIHALKLPIVVGGSGMYINALVYGIHHIPEITLEIRMQVQDLYKKLTKQEFYQKLIDLDPISKNYIHSSDAQRMIRAYEVVLQTNKSIFSYHNSKLVSPLEGYNVKKIILLPDRQLLYQNCNQRFAKLATNGELVDEIIKIKPYYDHISISAKKALGINEIISYLNQELTIEEAITIAQQKIRQYAKRQLTWFRNQTINGYTLHYQSMSELYKTQVNDVFFN.

9-16 (GPTASGKS) is an ATP binding site. Residue 11 to 16 (TASGKS) coordinates substrate. Interaction with substrate tRNA stretches follow at residues 34-37 (DSMQ) and 195-199 (QRMIR).

Belongs to the IPP transferase family. Monomer. Mg(2+) serves as cofactor.

The catalysed reaction is adenosine(37) in tRNA + dimethylallyl diphosphate = N(6)-dimethylallyladenosine(37) in tRNA + diphosphate. Catalyzes the transfer of a dimethylallyl group onto the adenine at position 37 in tRNAs that read codons beginning with uridine, leading to the formation of N6-(dimethylallyl)adenosine (i(6)A). This chain is tRNA dimethylallyltransferase, found in Orientia tsutsugamushi (strain Ikeda) (Rickettsia tsutsugamushi).